The primary structure comprises 166 residues: Disulfide bond reductase DsbH (166 aa).

A signal peptide spans 1-22; it reads MKFWLQGCAFVGCLLLTLPCCA. The 135-residue stretch at 32–166 folds into the Thioredoxin domain; that stretch reads LQQTRPIAAA…SKVKSALKLR (135 aa). Cysteines 72 and 75 form a disulfide. 73–74 is a substrate binding site; it reads MW.

As to quaternary structure, monomer.

The protein resides in the periplasm. In terms of biological role, catalyzes the reduction of disulfide bonds. May function in reducing intermolecular disulfides between proteins and small molecules in the periplasm, or keeping a specific subset of periplasmic proteins reduced, or maintaining the periplasm of Chlamydia in a generally reducing state. Seems to be unable to oxidize thiols into disulfides and does not display disulfide bond isomerase activity. This chain is Disulfide bond reductase DsbH (dsbH), found in Chlamydia pneumoniae (Chlamydophila pneumoniae).